Reading from the N-terminus, the 73-residue chain is Putative antitoxin VapB21 (73 aa).

The protein belongs to the UPF0330 family.

In terms of biological role, possibly the antitoxin component of a type II toxin-antitoxin (TA) system. Its cognate toxin is VapC21 (Potential). This is Putative antitoxin VapB21 (vapB21) from Sulfurisphaera tokodaii (strain DSM 16993 / JCM 10545 / NBRC 100140 / 7) (Sulfolobus tokodaii).